A 474-amino-acid polypeptide reads, in one-letter code: Aromatic amino acid aminotransferase C56E4.03 (474 aa).

The protein belongs to the class-I pyridoxal-phosphate-dependent aminotransferase family. Pyridoxal 5'-phosphate is required as a cofactor.

It localises to the cytoplasm. It carries out the reaction an aromatic L-alpha-amino acid + 2-oxoglutarate = an aromatic oxo-acid + L-glutamate. Has aromatic amino acid transaminase activity. In Schizosaccharomyces pombe (strain 972 / ATCC 24843) (Fission yeast), this protein is Aromatic amino acid aminotransferase C56E4.03.